A 103-amino-acid polypeptide reads, in one-letter code: Large ribosomal subunit protein uL23 (103 aa).

It belongs to the universal ribosomal protein uL23 family. In terms of assembly, part of the 50S ribosomal subunit. Contacts protein L29, and trigger factor when it is bound to the ribosome.

Its function is as follows. One of the early assembly proteins it binds 23S rRNA. One of the proteins that surrounds the polypeptide exit tunnel on the outside of the ribosome. Forms the main docking site for trigger factor binding to the ribosome. The polypeptide is Large ribosomal subunit protein uL23 (Aquifex aeolicus (strain VF5)).